The chain runs to 449 residues: Adenylosuccinate synthetase isozyme 1 B (449 aa).

Residues 34 to 40 and 62 to 64 each bind GTP; these read GDEGKGK and GHT. The Proton acceptor role is filled by Asp-35. Positions 35 and 62 each coordinate Mg(2+). Substrate is bound at residue Asp-35. IMP contacts are provided by residues 35-38, 60-63, Thr-155, Arg-169, Asn-248, Thr-263, and Arg-327; these read DEGK and NAGH. Catalysis depends on His-63, which acts as the Proton donor. Position 323 to 329 (323 to 329) interacts with substrate; it reads VTTGRKR. GTP is bound by residues Arg-329, 355-357, and 437-440; these read KLD and GVGK.

The protein belongs to the adenylosuccinate synthetase family. In terms of assembly, homodimer. Requires Mg(2+) as cofactor.

It localises to the cytoplasm. The catalysed reaction is IMP + L-aspartate + GTP = N(6)-(1,2-dicarboxyethyl)-AMP + GDP + phosphate + 2 H(+). Its pathway is purine metabolism; AMP biosynthesis via de novo pathway; AMP from IMP: step 1/2. Component of the purine nucleotide cycle (PNC), which interconverts IMP and AMP to regulate the nucleotide levels in various tissues, and which contributes to glycolysis and ammoniagenesis. Catalyzes the first committed step in the biosynthesis of AMP from IMP. The polypeptide is Adenylosuccinate synthetase isozyme 1 B (adss1b) (Salmo salar (Atlantic salmon)).